Here is a 666-residue protein sequence, read N- to C-terminus: MGRIVGIDLGTTNSVIGVLEAGRPFVIANAEGSRTTPSVIGYTKESELVVGQQARRQLVLNPKNTFSNLKRYVGRSWDELEENSLNVAYTIRANNQGCVRVTCPITEREYAPEELIGSIIRKLIDDAEKYLSETIDSAVITVPAYFNDSQRQATKDAALLAGVRVERILNEPTAAALAYGFDKSSSSRVLVFDLGGGTFDISLLRISNGVFDVKATSGDTQLGGNDFDQKIVEWLANDFKKEHNIDLRRDRQSLQRLNEVAEKAKQELSGLNSTPISLPFIATGPNGPLHIETKLDRKTFESLCKDLIDRLLQPVEVALQDSGWTADDINDVVLVGGGTRMPMVQQLVKTIVPVTPSQSVNPDEVVAIGAAVQAGILTGELRDLLLNDVTPLSLGLETIGGLMKVLIPRNTPIPVRQADVFSTSEANQSSVEINVWQGERQLASDNKSLGKFRLSGIPPAPRGVPQVQVAFDIDANGMLQVSATDRTTGRKQSVSINGGSNLNEDEVNNLIEEAKDKADVDRRKRASIDQRNNALTLVAQAERRLRDVSLEFGPYGAERQQRAVEVSLRDVQDFLDSDDLAELDLAVSSLQEALFGLNRRISAEKRTDNNPIQGIKNTFGSLKDELFSDDYWDDDPWDYHPNNNRVGGGRDYGGRNLDRWDNDFYN.

Threonine 198 is subject to Phosphothreonine; by autocatalysis.

This sequence belongs to the heat shock protein 70 family.

In terms of biological role, acts as a chaperone. This chain is Chaperone protein dnaK1 (dnaK1), found in Prochlorococcus marinus (strain SARG / CCMP1375 / SS120).